The sequence spans 634 residues: Chaperone protein DnaK 2 (634 aa).

Residue threonine 197 is modified to Phosphothreonine; by autocatalysis. The span at 600-620 (ASAEASANAQAGPSSSSSSSS) shows a compositional bias: low complexity. The disordered stretch occupies residues 600–634 (ASAEASANAQAGPSSSSSSSSGDDDVIDAEFSESK). Positions 621–634 (GDDDVIDAEFSESK) are enriched in acidic residues.

Belongs to the heat shock protein 70 family.

Acts as a chaperone. This chain is Chaperone protein DnaK 2, found in Synechococcus sp. (strain ATCC 27144 / PCC 6301 / SAUG 1402/1) (Anacystis nidulans).